The sequence spans 157 residues: Succinate dehydrogenase [ubiquinone] cytochrome b small subunit, mitochondrial (157 aa).

Residues 1-45 (MAALVLLRAGLARPRGVPTALLRGTLLRHSAVLTAAADRSAPARQ) constitute a mitochondrion transit peptide. Over 46 to 61 (SHGGAPQGHGSSKAAS) the chain is Mitochondrial matrix. A helical membrane pass occupies residues 62–83 (LHWTSERAVSALLLGLLPAAYL). The Mitochondrial intermembrane segment spans residues 84–88 (YPGPA). The chain crosses the membrane as a helical span at residues 89–109 (VDYSLAAALTLHGHWGLGQVI). Histidine 100 contacts heme b. Over 110 to 118 (TDYVHGDTP) the chain is Mitochondrial matrix. Residue tyrosine 112 participates in a ubiquinone binding. Residues 119-140 (IKVANTGLYVLSAITFTGLCYF) traverse the membrane as a helical segment. Over 141–157 (NYYDVGICKAVAMLWSI) the chain is Mitochondrial intermembrane.

Belongs to the CybS family. In terms of assembly, component of complex II composed of four subunits: the flavoprotein (FP) SDHA, iron-sulfur protein (IP) SDHB, and a cytochrome b560 composed of SDHC and SDHD.

The protein resides in the mitochondrion inner membrane. Its pathway is carbohydrate metabolism; tricarboxylic acid cycle. Functionally, membrane-anchoring subunit of succinate dehydrogenase (SDH) that is involved in complex II of the mitochondrial electron transport chain and is responsible for transferring electrons from succinate to ubiquinone (coenzyme Q). SDH also oxidizes malate to the non-canonical enol form of oxaloacetate, enol-oxaloacetate. Enol-oxaloacetate, which is a potent inhibitor of the succinate dehydrogenase activity, is further isomerized into keto-oxaloacetate. The sequence is that of Succinate dehydrogenase [ubiquinone] cytochrome b small subunit, mitochondrial (SDHD) from Gallus gallus (Chicken).